Reading from the N-terminus, the 197-residue chain is Pyridoxal 5'-phosphate synthase subunit PdxT (197 aa).

G53–S55 serves as a coordination point for L-glutamine. Residue C85 is the Nucleophile of the active site. L-glutamine-binding positions include R114 and I142–R143. Residues H179 and E181 each act as charge relay system in the active site.

The protein belongs to the glutaminase PdxT/SNO family. In the presence of PdxS, forms a dodecamer of heterodimers. Only shows activity in the heterodimer.

It catalyses the reaction aldehydo-D-ribose 5-phosphate + D-glyceraldehyde 3-phosphate + L-glutamine = pyridoxal 5'-phosphate + L-glutamate + phosphate + 3 H2O + H(+). It carries out the reaction L-glutamine + H2O = L-glutamate + NH4(+). It participates in cofactor biosynthesis; pyridoxal 5'-phosphate biosynthesis. In terms of biological role, catalyzes the hydrolysis of glutamine to glutamate and ammonia as part of the biosynthesis of pyridoxal 5'-phosphate. The resulting ammonia molecule is channeled to the active site of PdxS. This is Pyridoxal 5'-phosphate synthase subunit PdxT from Thermococcus gammatolerans (strain DSM 15229 / JCM 11827 / EJ3).